The sequence spans 323 residues: MSTLPTQIAPNSSTSMAPTFLLVGMPGLSGAPSWWTLPLIAVYLLSALGNGTILWIIALQPALHRPMHFFLFLLSVSDIGLVTALMPTLLGIALAGAHTVPASACLLQMVFIHVFSVMESSVLLAMSIDRALAICRPLHYPALLTNGVISKISLAISFRCLGLHLPLPFLLAYMPYCLPQVLTHSYCLHPDVARLACPEAWGAAYSLFVVLSAMGLDPLLIFFSYGLIGKVLQGVESREDRWKAGQTCAAHLSAVLLFYIPMILLALINHPELPITQHTHTLLSYVHFLLPPLINPILYSVKMKEIRKRILNRLQPRKVGGAQ.

The Extracellular segment spans residues 1–33 (MSTLPTQIAPNSSTSMAPTFLLVGMPGLSGAPS). The N-linked (GlcNAc...) asparagine glycan is linked to asparagine 11. Residues 34–54 (WWTLPLIAVYLLSALGNGTIL) traverse the membrane as a helical segment. At 55–62 (WIIALQPA) the chain is on the cytoplasmic side. The helical transmembrane segment at 63–83 (LHRPMHFFLFLLSVSDIGLVT) threads the bilayer. Residues 84–107 (ALMPTLLGIALAGAHTVPASACLL) are Extracellular-facing. Cysteine 105 and cysteine 197 are disulfide-bonded. The helical transmembrane segment at 108–128 (QMVFIHVFSVMESSVLLAMSI) threads the bilayer. At 129–147 (DRALAICRPLHYPALLTNG) the chain is on the cytoplasmic side. Residues 148 to 168 (VISKISLAISFRCLGLHLPLP) form a helical membrane-spanning segment. At 169 to 203 (FLLAYMPYCLPQVLTHSYCLHPDVARLACPEAWGA) the chain is on the extracellular side. Residues 204–224 (AYSLFVVLSAMGLDPLLIFFS) form a helical membrane-spanning segment. Topologically, residues 225 to 244 (YGLIGKVLQGVESREDRWKA) are cytoplasmic. The helical transmembrane segment at 245-265 (GQTCAAHLSAVLLFYIPMILL) threads the bilayer. Residues 266 to 280 (ALINHPELPITQHTH) lie on the Extracellular side of the membrane. The chain crosses the membrane as a helical span at residues 281–301 (TLLSYVHFLLPPLINPILYSV). Residues 302–323 (KMKEIRKRILNRLQPRKVGGAQ) are Cytoplasmic-facing.

The protein belongs to the G-protein coupled receptor 1 family.

It localises to the cell membrane. Odorant receptor. This chain is Olfactory receptor 51S1 (OR51S1), found in Homo sapiens (Human).